The sequence spans 369 residues: Cytochrome b561 and DOMON domain-containing protein At3g07570 (369 aa).

A signal peptide spans Met1–Ala22. One can recognise a DOMON domain in the interval Gln55–Gly167. In terms of domain architecture, Cytochrome b561 spans Ser174–Lys369. A helical membrane pass occupies residues Thr212–Ala232. The heme b site is built by His213 and His246. 2 consecutive transmembrane segments (helical) span residues Ile247–Leu267 and His279–Ala299. Residues His279 and His315 each contribute to the heme b site. Transmembrane regions (helical) follow at residues Leu321–Thr341 and Trp343–Val363.

It depends on heme b as a cofactor.

It localises to the membrane. In terms of biological role, may act as a catecholamine-responsive trans-membrane electron transporter. The sequence is that of Cytochrome b561 and DOMON domain-containing protein At3g07570 from Arabidopsis thaliana (Mouse-ear cress).